Here is a 450-residue protein sequence, read N- to C-terminus: Phosphoglucosamine mutase (450 aa).

Catalysis depends on Ser101, which acts as the Phosphoserine intermediate. Mg(2+)-binding residues include Ser101, Asp241, Asp243, and Asp245. At Ser101 the chain carries Phosphoserine.

This sequence belongs to the phosphohexose mutase family. The cofactor is Mg(2+). Activated by phosphorylation.

It carries out the reaction alpha-D-glucosamine 1-phosphate = D-glucosamine 6-phosphate. Its function is as follows. Catalyzes the conversion of glucosamine-6-phosphate to glucosamine-1-phosphate. This Listeria innocua serovar 6a (strain ATCC BAA-680 / CLIP 11262) protein is Phosphoglucosamine mutase.